A 243-amino-acid chain; its full sequence is DNA repair protein RecO (243 aa).

This sequence belongs to the RecO family.

Functionally, involved in DNA repair and RecF pathway recombination. The polypeptide is DNA repair protein RecO (Thermobifida fusca (strain YX)).